The sequence spans 434 residues: Serine--tRNA ligase (434 aa).

239-241 provides a ligand contact to L-serine; that stretch reads TAE. 270–272 contacts ATP; it reads RSE. E293 contacts L-serine. 357–360 contacts ATP; that stretch reads EISS. S392 serves as a coordination point for L-serine.

Belongs to the class-II aminoacyl-tRNA synthetase family. Type-1 seryl-tRNA synthetase subfamily. As to quaternary structure, homodimer. The tRNA molecule binds across the dimer.

The protein resides in the cytoplasm. It carries out the reaction tRNA(Ser) + L-serine + ATP = L-seryl-tRNA(Ser) + AMP + diphosphate + H(+). It catalyses the reaction tRNA(Sec) + L-serine + ATP = L-seryl-tRNA(Sec) + AMP + diphosphate + H(+). It participates in aminoacyl-tRNA biosynthesis; selenocysteinyl-tRNA(Sec) biosynthesis; L-seryl-tRNA(Sec) from L-serine and tRNA(Sec): step 1/1. Catalyzes the attachment of serine to tRNA(Ser). Is also able to aminoacylate tRNA(Sec) with serine, to form the misacylated tRNA L-seryl-tRNA(Sec), which will be further converted into selenocysteinyl-tRNA(Sec). The sequence is that of Serine--tRNA ligase from Cupriavidus necator (strain ATCC 17699 / DSM 428 / KCTC 22496 / NCIMB 10442 / H16 / Stanier 337) (Ralstonia eutropha).